The following is a 420-amino-acid chain: Calreticulin (420 aa).

The signal sequence occupies residues 1-25 (MAIRKGSSYAVAALLALASVAAVAG). Residue Asn-57 is glycosylated (N-linked (GlcNAc...) asparagine). Tyr-115, Lys-117, Tyr-134, and Asp-141 together coordinate an alpha-D-glucoside. 7 tandem repeats follow at residues 197–208 (KHTGSIYEHWDI), 216–227 (DPEAKKPEDWDD), 233–244 (DPEDKKPEGYDD), 251–262 (DPDAKKPEDWDD), 266–276 (GEWTAPTIPNP), 280–290 (GPWKQKKIKNP), and 294–304 (GKWKAPMIDNP). Residues 197 to 262 (KHTGSIYEHW…DAKKPEDWDD (66 aa)) are 4 X approximate repeats. Residues 213-258 (KIKDPEAKKPEDWDDKEYIPDPEDKKPEGYDDIPKEIPDPDAKKPE) are compositionally biased toward basic and acidic residues. Residues 213 to 285 (KIKDPEAKKP…PEYKGPWKQK (73 aa)) form a disordered region. A 3 X approximate repeats region spans residues 266–304 (GEWTAPTIPNPEYKGPWKQKKIKNPNYQGKWKAPMIDNP). An alpha-D-glucoside is bound at residue Glu-324. Positions 355–381 (GKHKEAEKAAFDEAEKKKEEEDAAKGG) are enriched in basic and acidic residues. A disordered region spans residues 355 to 420 (GKHKEAEKAA…DSDDEKHDEL (66 aa)). The segment covering 382-402 (DDEDDDLEDEEDDEKADEDKA) has biased composition (acidic residues). A compositionally biased stretch (basic and acidic residues) spans 403-420 (DSDAEDGKDSDDEKHDEL). Positions 417–420 (HDEL) match the Prevents secretion from ER motif.

The protein belongs to the calreticulin family.

The protein localises to the endoplasmic reticulum lumen. Molecular calcium-binding chaperone promoting folding, oligomeric assembly and quality control in the ER via the calreticulin/calnexin cycle. This lectin may interact transiently with almost all of the monoglucosylated glycoproteins that are synthesized in the ER. In Zea mays (Maize), this protein is Calreticulin (CRT).